Here is a 920-residue protein sequence, read N- to C-terminus: Isoleucine--tRNA ligase (920 aa).

The short motif at 58 to 68 (PYANGHLHLGH) is the 'HIGH' region element. Glu-569 is a binding site for L-isoleucyl-5'-AMP. A 'KMSKS' region motif is present at residues 610–614 (KMSKS). Lys-613 provides a ligand contact to ATP. The Zn(2+) site is built by Cys-895, Cys-898, Cys-910, and Cys-913.

The protein belongs to the class-I aminoacyl-tRNA synthetase family. IleS type 1 subfamily. In terms of assembly, monomer. Zn(2+) serves as cofactor.

It localises to the cytoplasm. It carries out the reaction tRNA(Ile) + L-isoleucine + ATP = L-isoleucyl-tRNA(Ile) + AMP + diphosphate. In terms of biological role, catalyzes the attachment of isoleucine to tRNA(Ile). As IleRS can inadvertently accommodate and process structurally similar amino acids such as valine, to avoid such errors it has two additional distinct tRNA(Ile)-dependent editing activities. One activity is designated as 'pretransfer' editing and involves the hydrolysis of activated Val-AMP. The other activity is designated 'posttransfer' editing and involves deacylation of mischarged Val-tRNA(Ile). The sequence is that of Isoleucine--tRNA ligase from Helicobacter pylori (strain G27).